The following is a 608-amino-acid chain: Threonine--tRNA ligase (608 aa).

The tract at residues 1–143 (MRVLYIHAER…SFKPEEGRAD (143 aa)) is editing domain. 2 catalytic regions span residues 194-490 (PKYL…PRLP) and 195-490 (KYLE…PRLP). Positions 287, 338, and 459 each coordinate Zn(2+).

This sequence belongs to the class-II aminoacyl-tRNA synthetase family. Homodimer. Zn(2+) serves as cofactor.

Its subcellular location is the cytoplasm. It catalyses the reaction tRNA(Thr) + L-threonine + ATP = L-threonyl-tRNA(Thr) + AMP + diphosphate + H(+). Catalyzes the attachment of threonine to tRNA(Thr) in a two-step reaction: L-threonine is first activated by ATP to form Thr-AMP and then transferred to the acceptor end of tRNA(Thr). Also edits incorrectly charged L-seryl-tRNA(Thr). This is Threonine--tRNA ligase from Pyrobaculum aerophilum (strain ATCC 51768 / DSM 7523 / JCM 9630 / CIP 104966 / NBRC 100827 / IM2).